A 985-amino-acid polypeptide reads, in one-letter code: MECCAPVIGEILRLMYESTFSRVANAIKFKSNVKALNESLERLTELKGNMSEDHETLLTKDKPLRLKLMRWQREAEEVISKARLKLEERVSCGMSLRPRMSRKLVKILDEVKMLEKDGIEFVDMLSVESTPERVEHVPGVSVVHQTMASNMLAKIRDGLTSEKAQKIGVWGMGGVGKTTLVRTLNNKLREEGATQPFGLVIFVIVSKEFDPREVQKQIAERLDIDTQMEESEEKLARRIYVGLMKERKFLLILDDVWKPIDLDLLGIPRTEENKGSKVILTSRFLEVCRSMKTDLDVRVDCLLEEDAWELFCKNAGDVVRSDHVRKIAKAVSQECGGLPLAIITVGTAMRGKKNVKLWNHVLSKLSKSVPWIKSIEEKIFQPLKLSYDFLEDKAKFCFLLCALFPEDYSIEVTEVVRYWMAEGFMEELGSQEDSMNEGITTVESLKDYCLLEDGDRRDTVKMHDVVRDFAIWIMSSSQDDSHSLVMSGTGLQDIRQDKLAPSLRRVSLMNNKLESLPDLVEEFCVKTSVLLLQGNFLLKEVPIGFLQAFPTLRILNLSGTRIKSFPSCSLLRLFSLHSLFLRDCFKLVKLPSLETLAKLELLDLCGTHILEFPRGLEELKRFRHLDLSRTLHLESIPARVVSRLSSLETLDMTSSHYRWSVQGETQKGQATVEEIGCLQRLQVLSIRLHSSPFLLNKRNTWIKRLKKFQLVVGSRYILRTRHDKRRLTISHLNVSQVSIGWLLAYTTSLALNHCQGIEAMMKKLVSDNKGFKNLKSLTIENVIINTNSWVEMVSTNTSKQSSDILDLLPNLEELHLRRVDLETFSELQTHLGLKLETLKIIEITMCRKLRTLLDKRNFLTIPNLEEIEISYCDSLQNLHEALLYHQPFVPNLRVLKLRNLPNLVSICNWGEVWECLEQVEVIHCNQLNCLPISSTCGRIKKIKGELSWWERLEWDDPSALTTVQPFFNPVREVPLLIADATTQML.

Residues 24–88 (ANAIKFKSNV…ISKARLKLEE (65 aa)) are a coiled coil. The NB-ARC domain occupies 167 to 429 (IGVWGMGGVG…MAEGFMEELG (263 aa)). 171 to 178 (GMGGVGKT) provides a ligand contact to ATP. 6 LRR repeats span residues 502-523 (SLRRVSLMNNKLESLPDLVEEF), 526-547 (KTSVLLLQGNFLLKEVPIGFLQ), 551-572 (TLRILNLSGTRIKSFPSCSLLR), 575-597 (SLHSLFLRDCFKLVKLPSLETLA), 598-620 (KLELLDLCGTHILEFPRGLEELK), and 621-643 (RFRHLDLSRTLHLESIPARVVSR).

This sequence belongs to the disease resistance NB-LRR family.

Its function is as follows. Disease resistance protein. The protein is Disease resistance protein At4g27190 of Arabidopsis thaliana (Mouse-ear cress).